The following is a 357-amino-acid chain: Uroporphyrinogen decarboxylase (357 aa).

Substrate-binding positions include 27 to 31, aspartate 77, tyrosine 154, serine 209, and histidine 330; that span reads RQAGR.

It belongs to the uroporphyrinogen decarboxylase family. Homodimer.

Its subcellular location is the cytoplasm. It carries out the reaction uroporphyrinogen III + 4 H(+) = coproporphyrinogen III + 4 CO2. It participates in porphyrin-containing compound metabolism; protoporphyrin-IX biosynthesis; coproporphyrinogen-III from 5-aminolevulinate: step 4/4. In terms of biological role, catalyzes the decarboxylation of four acetate groups of uroporphyrinogen-III to yield coproporphyrinogen-III. The polypeptide is Uroporphyrinogen decarboxylase (Acinetobacter baumannii (strain SDF)).